We begin with the raw amino-acid sequence, 112 residues long: UPF0212 protein Mboo_1659 (112 aa).

Belongs to the UPF0212 family.

This Methanoregula boonei (strain DSM 21154 / JCM 14090 / 6A8) protein is UPF0212 protein Mboo_1659.